The primary structure comprises 170 residues: Photosystem I assembly protein Ycf3 (170 aa).

3 TPR repeats span residues 35-68, 72-105, and 120-153; these read AFTY…EIDP, SYIL…NPFL, and GEQA…TPGN.

Belongs to the Ycf3 family.

The protein resides in the plastid. The protein localises to the chloroplast thylakoid membrane. In terms of biological role, essential for the assembly of the photosystem I (PSI) complex. May act as a chaperone-like factor to guide the assembly of the PSI subunits. The sequence is that of Photosystem I assembly protein Ycf3 from Triticum aestivum (Wheat).